We begin with the raw amino-acid sequence, 598 residues long: Beta-myrcene/(E)-beta-ocimene synthase 2, chloroplastic (598 aa).

Residues Met-1–Ser-30 constitute a chloroplast transit peptide. Arg-307, Asp-344, Asp-348, Arg-486, and Asn-489 together coordinate (2E)-geranyl diphosphate. Residues Asp-344 and Asp-348 each coordinate Mg(2+). Residues Asp-344–Asp-348 carry the DDXXD motif motif. Positions 489, 493, and 497 each coordinate Mg(2+).

It belongs to the terpene synthase family. Tpsb subfamily. The cofactor is Mg(2+). Mn(2+) serves as cofactor. In terms of tissue distribution, expressed exclusively in mature flowers, but not in inmmature buds.

It is found in the plastid. It localises to the chloroplast. It catalyses the reaction (2E)-geranyl diphosphate = beta-myrcene + diphosphate. The protein operates within secondary metabolite biosynthesis; terpenoid biosynthesis. Functionally, involved in monoterpene (C10) biosynthesis. The major products are alpha- and beta-pinene, sabinene, beta-myrcene, (E)-beta-ocimene and limonene. The protein is Beta-myrcene/(E)-beta-ocimene synthase 2, chloroplastic (TPS24) of Arabidopsis thaliana (Mouse-ear cress).